A 483-amino-acid chain; its full sequence is BTB/POZ domain and ankyrin repeat-containing protein NBCL (483 aa).

The 85-residue stretch at 25-109 folds into the BTB domain; that stretch reads SDVTFSVEGR…LYSGQVSIVP (85 aa). The segment at 115–129 adopts a C2HC NPR-type zinc-finger fold; the sequence is RPNCGERACWHTHCT. Residues Cys-118, Cys-123, His-125, and Cys-128 each coordinate Zn(2+). ANK repeat units follow at residues 254 to 283, 284 to 313, 318 to 347, and 351 to 385; these read QKIR…LNLD, EALA…DVNY, SGKT…DPNV, and DGVT…KLRL. Residues 401-437 are disordered; sequence EGNANANSSNNNNAPCSAATPIYPPMNEDHNSSSSNA. The segment covering 403–419 has biased composition (low complexity); sequence NANANSSNNNNAPCSAA.

Belongs to the plant 'ANKYRIN-BTB/POZ' family. 'NOOT-BOP-COCH-like' (NBCL) subfamily. In terms of assembly, homodimer. Interacts with APP1 around the plasma membrane and in the nucleus; this interaction disturbs APP1-mediated regulation of the nuclear transcription factor Y subunit (NF-YA1). As to expression, mainly expressed in root nodules, to a lesser extent in shoot apical meristems (SAM) and root meristems (RM), and barely in leaves, non-nodulating roots and root apical meristems (RAM).

It localises to the nucleus. The protein resides in the cytoplasm. It is found in the cell membrane. The protein operates within protein modification; protein ubiquitination. Its function is as follows. May act as a substrate-specific adapter of an E3 ubiquitin-protein ligase complex (CUL3-RBX1-BTB) which mediates the ubiquitination and subsequent proteasomal degradation of target proteins. Transcriptional co-regulator involved in the promotion of leaf and floral meristem fate and determinacy. Required for the abscission of senescent organs, probably by regulating the cell wall disorganization in abscission zones (AZs, e.g. pulvini at the base of leaves). Involved in the coordination of the symbiotic nodule developmental program; promotes the formation of root nodules by interacting directly with APP1 to modulate the expression of the nuclear transcription factor Y subunit (NF-YA1), a key nodulin. Necessary for the robust maintenance of nodule identity throughout the nodule developmental program. The polypeptide is BTB/POZ domain and ankyrin repeat-containing protein NBCL (Lotus japonicus (Lotus corniculatus var. japonicus)).